We begin with the raw amino-acid sequence, 285 residues long: Alginate lyase (285 aa).

An N-terminal signal peptide occupies residues 1–20 (MIKSNLVISSLAIVSSMSYA).

Belongs to the polysaccharide lyase 6 family.

The enzyme catalyses Eliminative cleavage of alginate to give oligosaccharides with 4-deoxy-alpha-L-erythro-hex-4-enuronosyl groups at their non-reducing ends and beta-D-mannuronate at their reducing end.. This Photobacterium sp. (strain ATCC 43367) protein is Alginate lyase (alxM).